The following is a 135-amino-acid chain: Protein cornichon homolog 1 (135 aa).

3 helical membrane-spanning segments follow: residues Val2 to Gln22, Phe51 to Leu71, and Ile111 to Leu131.

This sequence belongs to the cornichon family. As to quaternary structure, interacts with HKT1;3.

The protein localises to the endoplasmic reticulum membrane. It is found in the golgi apparatus membrane. Functionally, acts as a cargo receptor necessary for the transportation of the cation transporter HKT1;3 and possibly other secretory proteins from the endoplasmic reticulum (ER) in COPII-coated vesicles targeted to the Golgi apparatus. This chain is Protein cornichon homolog 1, found in Oryza sativa subsp. japonica (Rice).